A 336-amino-acid polypeptide reads, in one-letter code: Effector SCP41 (336 aa).

The first 19 residues, 1–19 (MRTETASLLLLAALSVAEE), serve as a signal peptide directing secretion. Disordered regions lie at residues 59-99 (LFSP…STNN) and 189-230 (PVGN…GQKG). Residues 63-74 (QQQQQQQQQQQQ) show a composition bias toward low complexity.

As to quaternary structure, interacts with A.thaliana CBP60G; the interaction is direct. Interacts with A.thaliana SARD1. Interacts with G.hirsutum CBP60B.

It is found in the secreted. The protein resides in the host nucleus. Effector that binds transcription regulators in the host plant to suppress the host's innate immune response. Inhibits the host plant transcription regulators CBP60G and SARD1. This Verticillium dahliae (strain VdLs.17 / ATCC MYA-4575 / FGSC 10137) (Verticillium wilt) protein is Effector SCP41.